A 160-amino-acid chain; its full sequence is Transcription elongation factor GreA (160 aa).

Residues 43-76 (LSENAEYDAAREQQRQLENKIGDLESKLTRATIL) are a coiled coil.

It belongs to the GreA/GreB family.

Its function is as follows. Necessary for efficient RNA polymerase transcription elongation past template-encoded arresting sites. The arresting sites in DNA have the property of trapping a certain fraction of elongating RNA polymerases that pass through, resulting in locked ternary complexes. Cleavage of the nascent transcript by cleavage factors such as GreA or GreB allows the resumption of elongation from the new 3'terminus. GreA releases sequences of 2 to 3 nucleotides. This chain is Transcription elongation factor GreA, found in Chlorobium phaeobacteroides (strain BS1).